The following is a 317-amino-acid chain: uncharacterized protein (317 aa).

Positions 1–16 (MKLSFILSTLVAGALA) are cleaved as a signal peptide. Residue Asn-42 is glycosylated (N-linked (GlcNAc...) asparagine). 2 stretches are compositionally biased toward low complexity: residues 150-238 (SSST…SSSS) and 247-259 (TAST…ASSA). A disordered region spans residues 150-259 (SSSTPSSSSS…TDDSSSASSA (110 aa)).

This is an uncharacterized protein from Schizosaccharomyces pombe (strain 972 / ATCC 24843) (Fission yeast).